A 239-amino-acid polypeptide reads, in one-letter code: Probable 2-phosphosulfolactate phosphatase (239 aa).

The protein belongs to the ComB family. It depends on Mg(2+) as a cofactor.

The catalysed reaction is (2R)-O-phospho-3-sulfolactate + H2O = (2R)-3-sulfolactate + phosphate. This Clostridium botulinum (strain Kyoto / Type A2) protein is Probable 2-phosphosulfolactate phosphatase.